The primary structure comprises 203 residues: Small ribosomal subunit protein uS4 (203 aa).

The tract at residues Leu-20 to Ser-45 is disordered. An S4 RNA-binding domain is found at Met-92–Ala-155.

It belongs to the universal ribosomal protein uS4 family. As to quaternary structure, part of the 30S ribosomal subunit. Contacts protein S5. The interaction surface between S4 and S5 is involved in control of translational fidelity.

Functionally, one of the primary rRNA binding proteins, it binds directly to 16S rRNA where it nucleates assembly of the body of the 30S subunit. In terms of biological role, with S5 and S12 plays an important role in translational accuracy. The chain is Small ribosomal subunit protein uS4 from Synechococcus sp. (strain JA-3-3Ab) (Cyanobacteria bacterium Yellowstone A-Prime).